Here is a 200-residue protein sequence, read N- to C-terminus: NAD(P)H dehydrogenase (quinone) (200 aa).

The Flavodoxin-like domain occupies 4–191; the sequence is VLVLYYSSYG…GGARYQGALV (188 aa). Residues 10–15 and 79–81 contribute to the FMN site; these read SSYGHI and TRF. Tyr12 contacts NAD(+). Trp99 is a substrate binding site. Residues 114–120 and His135 contribute to the FMN site; that span reads STASQHG.

This sequence belongs to the WrbA family. FMN serves as cofactor.

It catalyses the reaction a quinone + NADH + H(+) = a quinol + NAD(+). The enzyme catalyses a quinone + NADPH + H(+) = a quinol + NADP(+). In Rhodospirillum centenum (strain ATCC 51521 / SW), this protein is NAD(P)H dehydrogenase (quinone).